We begin with the raw amino-acid sequence, 337 residues long: Tryptophan--tRNA ligase (337 aa).

ATP is bound by residues 11–13 (QPT) and 19–20 (GN). A 'HIGH' region motif is present at residues 12-20 (PTGALHLGN). L-tryptophan is bound at residue Asp-135. ATP is bound by residues 147 to 149 (GED), Val-191, and 200 to 204 (KMSKS). The 'KMSKS' region motif lies at 200–204 (KMSKS).

Belongs to the class-I aminoacyl-tRNA synthetase family. As to quaternary structure, homodimer.

Its subcellular location is the cytoplasm. The catalysed reaction is tRNA(Trp) + L-tryptophan + ATP = L-tryptophyl-tRNA(Trp) + AMP + diphosphate + H(+). Functionally, catalyzes the attachment of tryptophan to tRNA(Trp). This is Tryptophan--tRNA ligase from Prochlorococcus marinus (strain MIT 9313).